A 338-amino-acid chain; its full sequence is Probable protein S-acyltransferase 1 (338 aa).

Helical transmembrane passes span D32 to I52 and L68 to S88. The DHHC domain maps to K142–S192. The active-site S-palmitoyl cysteine intermediate is C172. The next 2 helical transmembrane spans lie at F186–W206 and I225–V245. Residues F319–R338 are disordered. The span at G320–R338 shows a compositional bias: basic and acidic residues.

The protein belongs to the DHHC palmitoyltransferase family.

The protein localises to the endosome membrane. The catalysed reaction is L-cysteinyl-[protein] + hexadecanoyl-CoA = S-hexadecanoyl-L-cysteinyl-[protein] + CoA. Functionally, palmitoyl acyltransferase. This Arabidopsis thaliana (Mouse-ear cress) protein is Probable protein S-acyltransferase 1 (PAT01).